The primary structure comprises 617 residues: Dihydroxy-acid dehydratase (617 aa).

Residue Asp-81 participates in Mg(2+) binding. A [2Fe-2S] cluster-binding site is contributed by Cys-122. Positions 123 and 124 each coordinate Mg(2+). At Lys-124 the chain carries N6-carboxylysine. Residue Cys-195 coordinates [2Fe-2S] cluster. A Mg(2+)-binding site is contributed by Glu-492. Ser-518 acts as the Proton acceptor in catalysis.

Belongs to the IlvD/Edd family. As to quaternary structure, homodimer. The cofactor is [2Fe-2S] cluster. Mg(2+) is required as a cofactor.

The catalysed reaction is (2R)-2,3-dihydroxy-3-methylbutanoate = 3-methyl-2-oxobutanoate + H2O. It carries out the reaction (2R,3R)-2,3-dihydroxy-3-methylpentanoate = (S)-3-methyl-2-oxopentanoate + H2O. It participates in amino-acid biosynthesis; L-isoleucine biosynthesis; L-isoleucine from 2-oxobutanoate: step 3/4. Its pathway is amino-acid biosynthesis; L-valine biosynthesis; L-valine from pyruvate: step 3/4. Functionally, functions in the biosynthesis of branched-chain amino acids. Catalyzes the dehydration of (2R,3R)-2,3-dihydroxy-3-methylpentanoate (2,3-dihydroxy-3-methylvalerate) into 2-oxo-3-methylpentanoate (2-oxo-3-methylvalerate) and of (2R)-2,3-dihydroxy-3-methylbutanoate (2,3-dihydroxyisovalerate) into 2-oxo-3-methylbutanoate (2-oxoisovalerate), the penultimate precursor to L-isoleucine and L-valine, respectively. The protein is Dihydroxy-acid dehydratase of Buchnera aphidicola subsp. Cinara cedri (strain Cc).